An 81-amino-acid polypeptide reads, in one-letter code: Exodeoxyribonuclease 7 small subunit (81 aa).

A disordered region spans residues 59-81 (KLVDKDGNEKTLDPQNASAPEEE). Residues 60–70 (LVDKDGNEKTL) show a composition bias toward basic and acidic residues. Polar residues predominate over residues 71–81 (DPQNASAPEEE).

Belongs to the XseB family. As to quaternary structure, heterooligomer composed of large and small subunits.

The protein resides in the cytoplasm. It catalyses the reaction Exonucleolytic cleavage in either 5'- to 3'- or 3'- to 5'-direction to yield nucleoside 5'-phosphates.. Its function is as follows. Bidirectionally degrades single-stranded DNA into large acid-insoluble oligonucleotides, which are then degraded further into small acid-soluble oligonucleotides. This chain is Exodeoxyribonuclease 7 small subunit, found in Lactobacillus gasseri (strain ATCC 33323 / DSM 20243 / BCRC 14619 / CIP 102991 / JCM 1131 / KCTC 3163 / NCIMB 11718 / NCTC 13722 / AM63).